A 304-amino-acid chain; its full sequence is Fluoroacetate dehalogenase (304 aa).

The region spanning 26–151 (PALLLLHGFP…FVARAYWHWY (126 aa)) is the AB hydrolase-1 domain. Asp104 (nucleophile) is an active-site residue. Fluoroacetate-binding residues include Arg105, Arg108, His149, Trp150, and Tyr212. The Proton acceptor role is filled by His271.

The protein belongs to the AB hydrolase superfamily. Epoxide hydrolase family. In terms of assembly, homodimer.

The catalysed reaction is a haloacetate + H2O = a halide anion + glycolate + H(+). It catalyses the reaction fluoroacetate + H2O = fluoride + glycolate + H(+). Catalyzes the hydrolytic defluorination of fluoroacetate to produce glycolate. Has only very low activity towards chloroacetate and bromoacetate. The protein is Fluoroacetate dehalogenase (fac-dex) of Burkholderia sp.